The sequence spans 177 residues: Large ribosomal subunit protein uL6 (177 aa).

The segment covering 152–171 (RPPEPYKGKGVRYDDEEVRR) has biased composition (basic and acidic residues). The segment at 152–177 (RPPEPYKGKGVRYDDEEVRRKEAKKK) is disordered.

Belongs to the universal ribosomal protein uL6 family. In terms of assembly, part of the 50S ribosomal subunit.

This protein binds to the 23S rRNA, and is important in its secondary structure. It is located near the subunit interface in the base of the L7/L12 stalk, and near the tRNA binding site of the peptidyltransferase center. This Shewanella sp. (strain ANA-3) protein is Large ribosomal subunit protein uL6.